Here is a 257-residue protein sequence, read N- to C-terminus: Diphthine synthase (257 aa).

S-adenosyl-L-methionine-binding positions include Ile11, Asp89, Ile92, 117 to 118 (SV), Leu169, Leu210, and His235.

The protein belongs to the diphthine synthase family. Homodimer.

It carries out the reaction 2-[(3S)-amino-3-carboxypropyl]-L-histidyl-[translation elongation factor 2] + 3 S-adenosyl-L-methionine = diphthine-[translation elongation factor 2] + 3 S-adenosyl-L-homocysteine + 3 H(+). The protein operates within protein modification; peptidyl-diphthamide biosynthesis. Functionally, S-adenosyl-L-methionine-dependent methyltransferase that catalyzes the trimethylation of the amino group of the modified target histidine residue in translation elongation factor 2 (EF-2), to form an intermediate called diphthine. The three successive methylation reactions represent the second step of diphthamide biosynthesis. The protein is Diphthine synthase of Saccharolobus islandicus (strain L.S.2.15 / Lassen #1) (Sulfolobus islandicus).